Reading from the N-terminus, the 77-residue chain is U14-theraphotoxin-Cg1a 1 (77 aa).

A signal peptide spans 1–21 (MKTSVLLVILGIAAITVQCTA). A propeptide spanning residues 22–49 (SESVEQDSLRTFVDAVLGWNAEMASEAR) is cleaved from the precursor. 3 disulfides stabilise this stretch: C50-C64, C57-C69, and C63-C75. K77 is modified (lysine amide).

Belongs to the neurotoxin 10 (Hwtx-1) family. 65 (Jztx-21) subfamily. In terms of tissue distribution, expressed by the venom gland.

It localises to the secreted. Its function is as follows. Probable ion channel inhibitor. The polypeptide is U14-theraphotoxin-Cg1a 1 (Chilobrachys guangxiensis (Chinese earth tiger tarantula)).